The following is a 1480-amino-acid chain: Heme-responsive zinc finger transcription factor HAP1 (1480 aa).

Polar residues predominate over residues 1–50; the sequence is MSNTPYNSSVPSIASMTQSSVSRSPNMHTATTPGANTSSNSPPLHMSSDS. The segment at 1-56 is disordered; sequence MSNTPYNSSVPSIASMTQSSVSRSPNMHTATTPGANTSSNSPPLHMSSDSSKIKRK. 6 residues coordinate Zn(2+): cysteine 64, cysteine 67, cysteine 74, cysteine 81, cysteine 84, and cysteine 93. The zn(2)-C6 fungal-type DNA-binding region spans 64–93; the sequence is CTICRKRKVKCDKLRPHCQQCTKTGVAHLC. Residues 105 to 134 adopt a coiled-coil conformation; it reads EKELLKDNELKKLRERVKSLEKTLSKVHSS. Residues 126-208 form a disordered region; it reads KTLSKVHSSP…ANSSSLSISN (83 aa). Residues 130-142 are compositionally biased toward low complexity; it reads KVHSSPSSNSLKS. Polar residues-rich tracts occupy residues 143–152 and 160–176; these read YNTPESSNLF and TLVNANTGSASSASHMH. Residues 177-208 are compositionally biased toward low complexity; sequence QQQQQQQQQEQQQDFSRSANANANSSSLSISN. Residues 244–441 are heme-responsive; required for HMC formation; that stretch reads KGDPYLKLLW…NTIPHHQPQS (198 aa). HRM repeat units lie at residues 280–285, 296–301, 320–325, 344–349, 386–391, and 412–417; these read KCPINH, KCPVDH, RCPVDH, and RCPIDH. Composition is skewed to polar residues over residues 429–444 and 703–731; these read STHNTIPHHQPQSGSH and QLNATIPATSQDVSNNGSKKANPSTNPTL. Disordered stretches follow at residues 429–456 and 703–764; these read STHNTIPHHQPQSGSHARSHPAQSRKHD and QLNA…KENQ. Residues 732 to 756 show a composition bias toward low complexity; the sequence is NNNMSAATTNSSSRSGSADSRSGSN. One copy of the HRM 7 repeat lies at 1189–1194; that stretch reads KCPVYQ. The segment at 1381–1408 is disordered; sequence TANTDTSANGSALSTLTSPQGSDLASNS. Residues 1385 to 1408 are compositionally biased toward polar residues; that stretch reads DTSANGSALSTLTSPQGSDLASNS.

In terms of assembly, binds DNA as a homodimer. Interacts with SRO9 and YDJ1. In the absence of heme, binds to at least four cellular proteins, including YDJ1 and SRO9, forming a high-molecular-weight complex (HMC) which results in repression of its activity and dictates its DNA-binding specificity.

It is found in the nucleus. In terms of biological role, regulation of oxygen dependent gene expression. It modulates the expression of Iso-1 (CYP1) and Iso-2 (CYP3) cytochrome c. In response to heme, promotes transcription of genes encoding functions required for respiration, controlling oxidative damage and repression of anaerobic genes. Binds to the sequence 5'-CGGNNNTNNCGG-3'. Is non-functional in terms of iso-1 cytochrome c expression in strain S288c and its derivatives. In Saccharomyces cerevisiae (strain Kyokai no. 7 / NBRC 101557) (Baker's yeast), this protein is Heme-responsive zinc finger transcription factor HAP1 (HAP1).